Consider the following 115-residue polypeptide: Inner membrane protein YidH (115 aa).

At 1–30 (MKISRLGEAPDYRFSLANERTFLAWIRTAL) the chain is on the cytoplasmic side. A helical transmembrane segment spans residues 31-51 (GFLAAGVGLDQLAPDFATPVI). Residues 52 to 53 (RE) lie on the Periplasmic side of the membrane. Residues 54 to 74 (LLALLLCLFSGGLAMYGYLRW) traverse the membrane as a helical segment. Topologically, residues 75-92 (LRNEKAMRLKEDLPYTNS) are cytoplasmic. A helical transmembrane segment spans residues 93 to 113 (LLIISLILMVVAVIVMGLVLY). Over 114–115 (AG) the chain is Periplasmic.

To M.tuberculosis Rv2272.

Its subcellular location is the cell inner membrane. The chain is Inner membrane protein YidH (yidH) from Escherichia coli O157:H7.